The following is a 173-amino-acid chain: MAEKRNIFLVGPMGAGKSTIGRQLAQQLNMEFFDSDQEIERRTGADVGWVFDVEGEEGFRDREEKVINELTEKQGIVLATGGGSVKSRETRNRLSARGVVVYLETTIEKQLARTQRDKKRPLLQVETPPREVLEALAKERNPLYEEIADVTIRTDEQSAKVVANQIINMLESN.

14–19 (GAGKST) serves as a coordination point for ATP. Residue S18 coordinates Mg(2+). Substrate contacts are provided by D36, R60, and G82. ATP is bound at residue R120. R140 contributes to the substrate binding site. Q157 is a binding site for ATP.

It belongs to the shikimate kinase family. In terms of assembly, monomer. The cofactor is Mg(2+).

The protein resides in the cytoplasm. The catalysed reaction is shikimate + ATP = 3-phosphoshikimate + ADP + H(+). Its pathway is metabolic intermediate biosynthesis; chorismate biosynthesis; chorismate from D-erythrose 4-phosphate and phosphoenolpyruvate: step 5/7. Functionally, catalyzes the specific phosphorylation of the 3-hydroxyl group of shikimic acid using ATP as a cosubstrate. This chain is Shikimate kinase 1, found in Pectobacterium atrosepticum (strain SCRI 1043 / ATCC BAA-672) (Erwinia carotovora subsp. atroseptica).